The primary structure comprises 279 residues: S-methyl-5'-thioadenosine phosphorylase (279 aa).

Phosphate-binding positions include S28, 70–71 (RH), and 103–104 (SA). M202 contributes to the substrate binding site. T203 contributes to the phosphate binding site. 226 to 228 (DYD) lines the substrate pocket.

This sequence belongs to the PNP/MTAP phosphorylase family. MTAP subfamily. Homohexamer. Dimer of a homotrimer.

The catalysed reaction is S-methyl-5'-thioadenosine + phosphate = 5-(methylsulfanyl)-alpha-D-ribose 1-phosphate + adenine. It functions in the pathway amino-acid biosynthesis; L-methionine biosynthesis via salvage pathway; S-methyl-5-thio-alpha-D-ribose 1-phosphate from S-methyl-5'-thioadenosine (phosphorylase route): step 1/1. In terms of biological role, catalyzes the reversible phosphorylation of S-methyl-5'-thioadenosine (MTA) to adenine and 5-methylthioribose-1-phosphate. Involved in the breakdown of MTA, a major by-product of polyamine biosynthesis. Responsible for the first step in the methionine salvage pathway after MTA has been generated from S-adenosylmethionine. Has broad substrate specificity with 6-aminopurine nucleosides as preferred substrates. The protein is S-methyl-5'-thioadenosine phosphorylase of Pyrobaculum aerophilum (strain ATCC 51768 / DSM 7523 / JCM 9630 / CIP 104966 / NBRC 100827 / IM2).